Consider the following 410-residue polypeptide: Argininosuccinate synthase (410 aa).

ATP-binding positions include 13-21 and alanine 40; that span reads AYSGGLDTS. L-citrulline-binding residues include tyrosine 91 and serine 96. Glycine 121 lines the ATP pocket. 3 residues coordinate L-aspartate: threonine 123, asparagine 127, and aspartate 128. Asparagine 127 lines the L-citrulline pocket. L-citrulline contacts are provided by arginine 131, serine 182, serine 191, glutamate 267, and tyrosine 279.

Belongs to the argininosuccinate synthase family. Type 1 subfamily. As to quaternary structure, homotetramer.

Its subcellular location is the cytoplasm. The catalysed reaction is L-citrulline + L-aspartate + ATP = 2-(N(omega)-L-arginino)succinate + AMP + diphosphate + H(+). The protein operates within amino-acid biosynthesis; L-arginine biosynthesis; L-arginine from L-ornithine and carbamoyl phosphate: step 2/3. This is Argininosuccinate synthase from Gluconobacter oxydans (strain 621H) (Gluconobacter suboxydans).